The following is a 398-amino-acid chain: Tryptophan synthase beta chain (398 aa).

K88 carries the N6-(pyridoxal phosphate)lysine modification.

It belongs to the TrpB family. As to quaternary structure, tetramer of two alpha and two beta chains. Pyridoxal 5'-phosphate serves as cofactor.

The catalysed reaction is (1S,2R)-1-C-(indol-3-yl)glycerol 3-phosphate + L-serine = D-glyceraldehyde 3-phosphate + L-tryptophan + H2O. It functions in the pathway amino-acid biosynthesis; L-tryptophan biosynthesis; L-tryptophan from chorismate: step 5/5. Functionally, the beta subunit is responsible for the synthesis of L-tryptophan from indole and L-serine. The protein is Tryptophan synthase beta chain of Mannheimia succiniciproducens (strain KCTC 0769BP / MBEL55E).